Reading from the N-terminus, the 835-residue chain is Peptide transporter family 1 (835 aa).

Helical transmembrane passes span 86-106 (IFFN…SIVA), 113-133 (FWTI…LALA), 150-170 (GLLI…AFGG), 183-203 (LFFS…TFIS), 222-242 (FGIP…GSFW), 325-345 (MFLP…VWLI), 368-388 (LNAV…YPVA), 401-421 (VTGG…QLQV), 697-717 (ILWQ…FSIT), 738-758 (WLLT…LNLF), and 765-785 (FFVY…LSIF). Residues 814–835 (PRYSIDNKGFHPDEKDTFDMHF) are disordered. Residues 821 to 835 (KGFHPDEKDTFDMHF) are compositionally biased toward basic and acidic residues.

Belongs to the major facilitator superfamily. Proton-dependent oligopeptide transporter (POT/PTR) (TC 2.A.17) family. Expressed specifically in the intestine.

It is found in the apical cell membrane. In terms of biological role, low-affinity peptide transporter that is necessary for proton-dependent uptake of di- or tripeptides, and to a minor extent tetrapeptides, in the intestine. Transport is independent of sodium and chloride ions. Controls the uptake of dietary fatty acids, plays a role in fatty acid synthesis and is responsible for dipeptide-induced acidification of the intestine. Regulates cellular pH differences together with the antiporter protein, nhx-2. Amino acid uptake and absorption levels influence the insulin signaling/daf-2 and let-363/TOR pathways, subsequently affecting the stress response and longevity of the organism. It is required for the uptake of the L-enantiomers of various amino acids, including L-glutamate. In response to the availability of amino acid nutrients, may play a role in promoting reproduction and fertility. The polypeptide is Peptide transporter family 1 (Caenorhabditis elegans).